Reading from the N-terminus, the 412-residue chain is Ribosomal RNA large subunit methyltransferase G (412 aa).

The disordered stretch occupies residues 386–412; it reads KAEPHENGESSSDTPNPQSSLYGGVKR. Positions 394 to 406 are enriched in polar residues; that stretch reads ESSSDTPNPQSSL.

Belongs to the methyltransferase superfamily. RlmG family.

Its subcellular location is the cytoplasm. It catalyses the reaction guanosine(1835) in 23S rRNA + S-adenosyl-L-methionine = N(2)-methylguanosine(1835) in 23S rRNA + S-adenosyl-L-homocysteine + H(+). In terms of biological role, specifically methylates the guanine in position 1835 (m2G1835) of 23S rRNA. This Shewanella sediminis (strain HAW-EB3) protein is Ribosomal RNA large subunit methyltransferase G.